The following is a 207-amino-acid chain: 3,4-dihydroxy-2-butanone 4-phosphate synthase (207 aa).

D-ribulose 5-phosphate contacts are provided by residues 28–29, D33, 140–144, and E164; these read RE and RRGHT. Position 29 (E29) interacts with Mg(2+). Mg(2+) is bound at residue H143.

It belongs to the DHBP synthase family. As to quaternary structure, homodimer. Mg(2+) serves as cofactor. Mn(2+) is required as a cofactor.

It carries out the reaction D-ribulose 5-phosphate = (2S)-2-hydroxy-3-oxobutyl phosphate + formate + H(+). It participates in cofactor biosynthesis; riboflavin biosynthesis; 2-hydroxy-3-oxobutyl phosphate from D-ribulose 5-phosphate: step 1/1. In terms of biological role, catalyzes the conversion of D-ribulose 5-phosphate to formate and 3,4-dihydroxy-2-butanone 4-phosphate. This chain is 3,4-dihydroxy-2-butanone 4-phosphate synthase, found in Oceanobacillus iheyensis (strain DSM 14371 / CIP 107618 / JCM 11309 / KCTC 3954 / HTE831).